The sequence spans 800 residues: Ribosome-releasing factor 2, mitochondrial (800 aa).

One can recognise a tr-type G domain in the interval 21-307 (SKVRNIGIIA…AIANYLPSPS (287 aa)). Residues 30-37 (AHIDAGKT), 95-99 (DTPGH), and 147-150 (NKMD) contribute to the GTP site.

It belongs to the TRAFAC class translation factor GTPase superfamily. Classic translation factor GTPase family. EF-G/EF-2 subfamily.

It is found in the mitochondrion. Its function is as follows. Mitochondrial GTPase that mediates the disassembly of ribosomes from messenger RNA at the termination of mitochondrial protein biosynthesis. Not involved in the GTP-dependent ribosomal translocation step during translation elongation. The protein is Ribosome-releasing factor 2, mitochondrial of Kluyveromyces lactis (strain ATCC 8585 / CBS 2359 / DSM 70799 / NBRC 1267 / NRRL Y-1140 / WM37) (Yeast).